The primary structure comprises 165 residues: MAATPAAIEVSLTIVFVLFFSADVSLTRNSEMKAHTSKMDSYSSSIYMNVLPTSLAQTSYHLAPISHLKCLSVQFSSHIHYSYYYGASVLERCVFHRSRIRGARFIVPIPFIAFPRHKNVFSQCTYFRRIPLGCLQRCSCSFWPRKSQNQICFEPSLRGHLIFVL.

A helical transmembrane segment spans residues 10–27; the sequence is VSLTIVFVLFFSADVSLT.

The protein resides in the membrane. This is an uncharacterized protein from Saccharomyces cerevisiae (strain ATCC 204508 / S288c) (Baker's yeast).